A 263-amino-acid chain; its full sequence is Glutamate racemase (263 aa).

Substrate contacts are provided by residues Asp10–Ser11 and Tyr42–Gly43. Cys73 serves as the catalytic Proton donor/acceptor. Substrate is bound at residue Asn74–Ser75. Cys183 (proton donor/acceptor) is an active-site residue. Thr184 to His185 contributes to the substrate binding site.

It belongs to the aspartate/glutamate racemases family.

The enzyme catalyses L-glutamate = D-glutamate. Its pathway is cell wall biogenesis; peptidoglycan biosynthesis. Its function is as follows. Provides the (R)-glutamate required for cell wall biosynthesis. The chain is Glutamate racemase from Acidothermus cellulolyticus (strain ATCC 43068 / DSM 8971 / 11B).